Consider the following 649-residue polypeptide: Acetyl-coenzyme A synthetase (649 aa).

Residues 191–194 (RGGR), Thr-311, and Asn-335 each bind CoA. ATP-binding positions include 387-389 (GEP), 411-416 (DTWWQT), Asp-500, and Arg-515. Ser-523 provides a ligand contact to CoA. Arg-526 lines the ATP pocket. The Mg(2+) site is built by Val-537, Phe-539, and Ile-542. Position 584 (Arg-584) interacts with CoA. At Lys-609 the chain carries N6-acetyllysine.

It belongs to the ATP-dependent AMP-binding enzyme family. Mg(2+) serves as cofactor. In terms of processing, acetylated. Deacetylation by the SIR2-homolog deacetylase activates the enzyme.

It catalyses the reaction acetate + ATP + CoA = acetyl-CoA + AMP + diphosphate. Its function is as follows. Catalyzes the conversion of acetate into acetyl-CoA (AcCoA), an essential intermediate at the junction of anabolic and catabolic pathways. AcsA undergoes a two-step reaction. In the first half reaction, AcsA combines acetate with ATP to form acetyl-adenylate (AcAMP) intermediate. In the second half reaction, it can then transfer the acetyl group from AcAMP to the sulfhydryl group of CoA, forming the product AcCoA. This Vibrio cholerae serotype O1 (strain ATCC 39315 / El Tor Inaba N16961) protein is Acetyl-coenzyme A synthetase.